A 443-amino-acid chain; its full sequence is Serine/threonine-protein phosphatase 2A 55 kDa regulatory subunit B beta isoform (443 aa).

WD repeat units lie at residues 22–61 (TEAD…KSQP), 87–128 (EIEE…KRPE), 171–209 (AHTY…RSFN), 220–260 (ELTE…LCDN), 279–317 (EIIS…KPLE), 334–375 (ENDC…DVTL), and 410–443 (DFSK…DKVN).

The protein belongs to the phosphatase 2A regulatory subunit B family. In terms of assembly, PP2A consists of a common heterodimeric core enzyme, composed of a 36 kDa catalytic subunit (subunit C) and a 65 kDa constant regulatory subunit (PR65 or subunit A), that associates with a variety of regulatory subunits.

The protein localises to the cytoplasm. It localises to the cytoskeleton. The protein resides in the membrane. Its function is as follows. The B regulatory subunit might modulate substrate selectivity and catalytic activity, and might also direct the localization of the catalytic enzyme to a particular subcellular compartment. The polypeptide is Serine/threonine-protein phosphatase 2A 55 kDa regulatory subunit B beta isoform (ppp2r2b) (Carassius auratus (Goldfish)).